The primary structure comprises 465 residues: Adenosylhomocysteinase (465 aa).

Residues Thr56, Asp131, and Glu191 each contribute to the substrate site. 192–194 provides a ligand contact to NAD(+); the sequence is TTT. Lys221 and Asp225 together coordinate substrate. NAD(+) contacts are provided by residues Asn226, 255-260, Glu278, Asn313, 334-336, and Asn379; these read GYGNVG and IGH.

The protein belongs to the adenosylhomocysteinase family. NAD(+) is required as a cofactor.

Its subcellular location is the cytoplasm. It catalyses the reaction S-adenosyl-L-homocysteine + H2O = L-homocysteine + adenosine. Its pathway is amino-acid biosynthesis; L-homocysteine biosynthesis; L-homocysteine from S-adenosyl-L-homocysteine: step 1/1. In terms of biological role, may play a key role in the regulation of the intracellular concentration of adenosylhomocysteine. The chain is Adenosylhomocysteinase from Bartonella quintana (strain Toulouse) (Rochalimaea quintana).